The following is a 262-amino-acid chain: Phosphomannomutase 1 (262 aa).

A2 is subject to N-acetylalanine. D19 (nucleophile) is an active-site residue. Mg(2+) contacts are provided by D19 and D21. Residue D21 is the Proton donor/acceptor of the active site. Residues R28, R132, R143, R150, M186, S188, and D190 each contribute to the alpha-D-mannose 1-phosphate site. 4 residues coordinate Mg(2+): N218, Y230, D232, and T235. S242 bears the Phosphoserine mark.

Belongs to the eukaryotic PMM family. In terms of assembly, homodimer. It depends on Mg(2+) as a cofactor. In terms of tissue distribution, present in brain, where it is restricted to neuronal cell bodies. Present at lower levels in pancreas, liver, lung, gonads, uterus, adrenal glands and pituitary (at protein level). Undetectable in intestine.

The protein localises to the cytoplasm. It catalyses the reaction alpha-D-mannose 1-phosphate = D-mannose 6-phosphate. Its pathway is nucleotide-sugar biosynthesis; GDP-alpha-D-mannose biosynthesis; alpha-D-mannose 1-phosphate from D-fructose 6-phosphate: step 2/2. With respect to regulation, IMP, a metabolite whose concentration is elevated in anoxia, inhibits phosphomannomutase and phosphoglucomutase activities and strongly enhances glucose-1,6-bisphosphatase activity. Involved in the synthesis of the GDP-mannose and dolichol-phosphate-mannose required for a number of critical mannosyl transfer reactions. In addition, may be responsible for the degradation of glucose-1,6-bisphosphate in ischemic brain. This Mus musculus (Mouse) protein is Phosphomannomutase 1 (Pmm1).